The following is a 342-amino-acid chain: Cell division protein ZipA (342 aa).

Topologically, residues 1 to 6 are periplasmic; it reads MEDLQL. The chain crosses the membrane as a helical span at residues 7 to 27; that stretch reads VLFILGAIAIVAVLVHGFWSI. Topologically, residues 28-342 are cytoplasmic; it reads RRQQPKSLKD…DYLHRIRANA (315 aa). The disordered stretch occupies residues 33-57; the sequence is KSLKDSPMGNFYKQQADKESPPKRV. The segment covering 47–57 has biased composition (basic and acidic residues); that stretch reads QADKESPPKRV.

It belongs to the ZipA family. Interacts with FtsZ via their C-terminal domains.

The protein localises to the cell inner membrane. Functionally, essential cell division protein that stabilizes the FtsZ protofilaments by cross-linking them and that serves as a cytoplasmic membrane anchor for the Z ring. Also required for the recruitment to the septal ring of downstream cell division proteins. This chain is Cell division protein ZipA, found in Shewanella sp. (strain W3-18-1).